Reading from the N-terminus, the 274-residue chain is Large ribosomal subunit protein uL2 (274 aa).

2 disordered regions span residues 28–55 and 224–274; these read APHA…RHVG and VAMN…RRRK.

This sequence belongs to the universal ribosomal protein uL2 family. As to quaternary structure, part of the 50S ribosomal subunit. Forms a bridge to the 30S subunit in the 70S ribosome.

One of the primary rRNA binding proteins. Required for association of the 30S and 50S subunits to form the 70S ribosome, for tRNA binding and peptide bond formation. It has been suggested to have peptidyltransferase activity; this is somewhat controversial. Makes several contacts with the 16S rRNA in the 70S ribosome. This chain is Large ribosomal subunit protein uL2, found in Pseudomonas putida (strain W619).